The following is a 335-amino-acid chain: Nucleoid-associated protein SeAg_B2375 (335 aa).

The protein belongs to the YejK family.

The protein resides in the cytoplasm. It localises to the nucleoid. This Salmonella agona (strain SL483) protein is Nucleoid-associated protein SeAg_B2375.